We begin with the raw amino-acid sequence, 502 residues long: Glycerol kinase (502 aa).

Thr-14 is an ADP binding site. Positions 14, 15, and 16 each coordinate ATP. Thr-14 contacts sn-glycerol 3-phosphate. Arg-18 provides a ligand contact to ADP. The sn-glycerol 3-phosphate site is built by Arg-84, Glu-85, Tyr-136, and Asp-246. Glycerol is bound by residues Arg-84, Glu-85, Tyr-136, Asp-246, and Gln-247. Positions 268 and 311 each coordinate ADP. Thr-268, Gly-311, Gln-315, and Gly-412 together coordinate ATP. Residues Gly-412 and Asn-416 each coordinate ADP.

It belongs to the FGGY kinase family. As to quaternary structure, homotetramer and homodimer (in equilibrium). Heterodimer with EIIA-Glc. Binds 1 zinc ion per glycerol kinase EIIA-Glc dimer. The zinc ion is important for dimerization.

It carries out the reaction glycerol + ATP = sn-glycerol 3-phosphate + ADP + H(+). The protein operates within polyol metabolism; glycerol degradation via glycerol kinase pathway; sn-glycerol 3-phosphate from glycerol: step 1/1. With respect to regulation, activity of this regulatory enzyme is affected by several metabolites. Allosterically and non-competitively inhibited by fructose 1,6-bisphosphate (FBP) and unphosphorylated phosphocarrier protein EIIA-Glc (III-Glc), an integral component of the bacterial phosphotransferase (PTS) system. Key enzyme in the regulation of glycerol uptake and metabolism. Catalyzes the phosphorylation of glycerol to yield sn-glycerol 3-phosphate. This chain is Glycerol kinase, found in Salmonella heidelberg (strain SL476).